Consider the following 407-residue polypeptide: Probable succinyl-diaminopimelate desuccinylase (407 aa).

Residue His-72 participates in Zn(2+) binding. Asp-74 is a catalytic residue. Asp-105 lines the Zn(2+) pocket. Residue Glu-139 is the Proton acceptor of the active site. Zn(2+) is bound by residues Glu-140, Glu-165, and His-378.

Belongs to the peptidase M20A family. Zn(2+) is required as a cofactor. Requires Co(2+) as cofactor.

The catalysed reaction is N-succinyl-(2S,6S)-2,6-diaminopimelate + H2O = (2S,6S)-2,6-diaminopimelate + succinate. The protein operates within amino-acid biosynthesis; L-lysine biosynthesis via DAP pathway; LL-2,6-diaminopimelate from (S)-tetrahydrodipicolinate (succinylase route): step 3/3. The polypeptide is Probable succinyl-diaminopimelate desuccinylase (dapE) (Staphylococcus aureus (strain MRSA252)).